The primary structure comprises 418 residues: MNVTILGAGVVGVTSAWYLAKAGHKVTVIDRQPAAALETSFANAGEVSPGYSSPWAAPGIPMKAMKWLFMKHAPLIIRPTADPAAWRWMSQMLRNCTSARYAINKSRMVRVAEYSRDCLMALREETGIDYDQRMQGTLEVFRTQKQFDAIGKDVDVLTAGGVPFEILDRDGCAAIEPGLAPAKEKIVGGLRLPGDETGDCFMFTTELARMAEEAGVTFLYDTGIMRPIVEGGRIKAVETTRGLIEADIFVAALGSYSPQFVRQLGLTLPVYPVKGYSITVPIVKEERAPVSTVMDETFKVAITRLGSRIRAGGMAEIAGFSKDLPAARQETLAHSVEDLFGGAGDQSQAKFWCGLRPMTPDGTPVIGATRYSNLYLNTGHGTLGWTMSCGSARVLADLISGNKPEIDTHDLAISRYAA.

3 to 17 contacts FAD; the sequence is VTILGAGVVGVTSAW.

The protein belongs to the DadA oxidoreductase family. FAD is required as a cofactor.

The enzyme catalyses a D-alpha-amino acid + A + H2O = a 2-oxocarboxylate + AH2 + NH4(+). It participates in amino-acid degradation; D-alanine degradation; NH(3) and pyruvate from D-alanine: step 1/1. Functionally, oxidative deamination of D-amino acids. The sequence is that of D-amino acid dehydrogenase from Agrobacterium fabrum (strain C58 / ATCC 33970) (Agrobacterium tumefaciens (strain C58)).